The primary structure comprises 348 residues: Probable mitochondrial adenine nucleotide transporter BTL1 (348 aa).

3 Solcar repeats span residues 46-129 (SREA…VKRA), 157-241 (SWIS…MKTS), and 251-338 (LSRP…WKDI). 6 helical membrane passes run 52–72 (FLSG…LETI), 104–124 (GNEI…GTFE), 156–176 (ISWI…STLV), 213–233 (FYAG…CYYF), 256–276 (MLVL…PLEV), and 321–341 (VMPS…ILLA).

The protein belongs to the mitochondrial carrier (TC 2.A.29) family.

It is found in the mitochondrion inner membrane. Functionally, probable mitochondrial adenylate carrier that catalyzes the transport of ATP, ADP and AMP. This Arabidopsis thaliana (Mouse-ear cress) protein is Probable mitochondrial adenine nucleotide transporter BTL1.